A 65-amino-acid polypeptide reads, in one-letter code: Large ribosomal subunit protein bL35 (65 aa).

A compositionally biased stretch (basic residues) spans 1–16 (MPKMKTKKSAAKRFKV). The interval 1–25 (MPKMKTKKSAAKRFKVRGSGSIKRG) is disordered.

The protein belongs to the bacterial ribosomal protein bL35 family.

The chain is Large ribosomal subunit protein bL35 from Bordetella parapertussis (strain 12822 / ATCC BAA-587 / NCTC 13253).